Reading from the N-terminus, the 295-residue chain is Trimeric intracellular cation channel type 1B.1 (295 aa).

Residues 1–27 (MVVPESFQLDQEILLDAGAQLHRLKMY) are Lumenal-facing. A helical membrane pass occupies residues 28–45 (PYFDVAHYLLMIIEVRDD). Residues 46 to 56 (LGSAASIFSRK) are Cytoplasmic-facing. Residues 57-80 (HPLSCWLSSMLMCFADAFLANFLL) form a discontinuously helical membrane-spanning segment. Residues 81–89 (GEPVIAPFK) are Lumenal-facing. A helical transmembrane segment spans residues 90–107 (RHDDIILATIIWYLVFYA). Residues 108–119 (PFDGIYKIAKIT) are Cytoplasmic-facing. A helical membrane pass occupies residues 120 to 148 (PVKCVLAVMKEVKRAYKVSHGVSHAAKLY). Residues lysine 129 and arginine 133 each coordinate a 1,2-diacyl-sn-glycero-3-phospho-(1D-myo-inositol-4,5-bisphosphate). The Lumenal segment spans residues 149–150 (PN). A discontinuously helical membrane pass occupies residues 151 to 177 (SYIVQVLVGTAKGAGSGIVRTLEQLVR). Serine 166 contributes to the a 1,2-diacyl-sn-glycero-3-phospho-(1D-myo-inositol-4,5-bisphosphate) binding site. Topologically, residues 178–188 (GVWLPTHNELL) are cytoplasmic. Residues 189 to 210 (RPSFATKACVVAASVLALEKSG) form a helical membrane-spanning segment. The Lumenal portion of the chain corresponds to 211-215 (TYLTA). A helical membrane pass occupies residues 216-239 (PHDLVYLVIVGFFVYFKLSAVILH). Residues 240-295 (VTDPFAPIENLFCAIFMGGIWDAVSRALAASRDRRAAGAHSNENGSSISTPEKKDQ) lie on the Cytoplasmic side of the membrane. The tract at residues 274–295 (RAAGAHSNENGSSISTPEKKDQ) is disordered.

This sequence belongs to the TMEM38 family. As to quaternary structure, homotrimer; trimerization probably requires binding to phosphatidylinositol 4,5-bisphosphate (PIP2).

The protein resides in the endoplasmic reticulum membrane. In terms of biological role, potassium channel that mediates transmembrane potassium transport. Might be required for maintenance of rapid intracellular calcium release. May act as a counter-ion channel that functions in synchronization with calcium release from intracellular stores. Binds phosphatidylinositol 4,5-bisphosphate (PIP2). In Caenorhabditis elegans, this protein is Trimeric intracellular cation channel type 1B.1.